The primary structure comprises 268 residues: Membrane lipoprotein TpN32 (268 aa).

Positions 1–23 (MKGKTVSAALVGKLIALSVGVVA) are cleaved as a signal peptide. A lipid anchor (N-palmitoyl cysteine) is attached at cysteine 24. Cysteine 24 carries the S-diacylglycerol cysteine lipid modification.

This sequence belongs to the NlpA lipoprotein family.

It is found in the cell membrane. This is Membrane lipoprotein TpN32 (tpn32) from Treponema pallidum (strain Nichols).